A 241-amino-acid chain; its full sequence is Sugar fermentation stimulation protein homolog (241 aa).

Belongs to the SfsA family.

The polypeptide is Sugar fermentation stimulation protein homolog (Trichormus variabilis (strain ATCC 29413 / PCC 7937) (Anabaena variabilis)).